The sequence spans 164 residues: UBA-like domain-containing protein 2 (164 aa).

Serine 2 carries the N-acetylserine modification. Residues 144–164 form a disordered region; sequence PPGASQGGAPQKAMAAMDGQR.

This sequence belongs to the UBALD family.

The chain is UBA-like domain-containing protein 2 (Ubald2) from Mus musculus (Mouse).